The primary structure comprises 442 residues: tRNA modification GTPase MnmE (442 aa).

The (6S)-5-formyl-5,6,7,8-tetrahydrofolate site is built by arginine 24, glutamate 82, and lysine 120. The region spanning 217–367 is the TrmE-type G domain; sequence GLHIVITGEP…LISLIKEKAE (151 aa). Residues 227-232, 246-252, and 271-274 contribute to the GTP site; these read NVGKST, SEYAGTT, and DTAG. Residues serine 231 and threonine 252 each contribute to the Mg(2+) site. A (6S)-5-formyl-5,6,7,8-tetrahydrofolate-binding site is contributed by lysine 442.

Belongs to the TRAFAC class TrmE-Era-EngA-EngB-Septin-like GTPase superfamily. TrmE GTPase family. As to quaternary structure, homodimer. Heterotetramer of two MnmE and two MnmG subunits. The cofactor is K(+).

Its subcellular location is the cytoplasm. In terms of biological role, exhibits a very high intrinsic GTPase hydrolysis rate. Involved in the addition of a carboxymethylaminomethyl (cmnm) group at the wobble position (U34) of certain tRNAs, forming tRNA-cmnm(5)s(2)U34. The chain is tRNA modification GTPase MnmE from Wolbachia sp. subsp. Drosophila simulans (strain wRi).